Reading from the N-terminus, the 238-residue chain is ATP-dependent dethiobiotin synthetase BioD (238 aa).

Position 13 to 18 (13 to 18 (DIGKTF)) interacts with ATP. Thr17 serves as a coordination point for Mg(2+). Lys38 is a catalytic residue. Ser42 serves as a coordination point for substrate. Residues Asp55, 116-119 (EGSG), 209-211 (PRI), and Asn216 each bind ATP. Mg(2+)-binding residues include Asp55 and Glu116.

Belongs to the dethiobiotin synthetase family. Homodimer. Mg(2+) is required as a cofactor.

Its subcellular location is the cytoplasm. It catalyses the reaction (7R,8S)-7,8-diammoniononanoate + CO2 + ATP = (4R,5S)-dethiobiotin + ADP + phosphate + 3 H(+). It functions in the pathway cofactor biosynthesis; biotin biosynthesis; biotin from 7,8-diaminononanoate: step 1/2. Functionally, catalyzes a mechanistically unusual reaction, the ATP-dependent insertion of CO2 between the N7 and N8 nitrogen atoms of 7,8-diaminopelargonic acid (DAPA, also called 7,8-diammoniononanoate) to form a ureido ring. In Clostridium novyi (strain NT), this protein is ATP-dependent dethiobiotin synthetase BioD.